The primary structure comprises 717 residues: Ribosomal RNA large subunit methyltransferase K/L (717 aa).

A THUMP domain is found at 45–142; sequence GAYRICLGSR…DKRSGVQTVQ (98 aa).

Belongs to the methyltransferase superfamily. RlmKL family.

The protein localises to the cytoplasm. The enzyme catalyses guanosine(2445) in 23S rRNA + S-adenosyl-L-methionine = N(2)-methylguanosine(2445) in 23S rRNA + S-adenosyl-L-homocysteine + H(+). It catalyses the reaction guanosine(2069) in 23S rRNA + S-adenosyl-L-methionine = N(2)-methylguanosine(2069) in 23S rRNA + S-adenosyl-L-homocysteine + H(+). Its function is as follows. Specifically methylates the guanine in position 2445 (m2G2445) and the guanine in position 2069 (m7G2069) of 23S rRNA. The chain is Ribosomal RNA large subunit methyltransferase K/L from Hahella chejuensis (strain KCTC 2396).